Reading from the N-terminus, the 292-residue chain is 4-hydroxy-tetrahydrodipicolinate synthase (292 aa).

Threonine 45 contributes to the pyruvate binding site. Tyrosine 133 functions as the Proton donor/acceptor in the catalytic mechanism. Lysine 161 serves as the catalytic Schiff-base intermediate with substrate. Isoleucine 203 provides a ligand contact to pyruvate.

The protein belongs to the DapA family. As to quaternary structure, homotetramer; dimer of dimers.

The protein resides in the cytoplasm. It carries out the reaction L-aspartate 4-semialdehyde + pyruvate = (2S,4S)-4-hydroxy-2,3,4,5-tetrahydrodipicolinate + H2O + H(+). It participates in amino-acid biosynthesis; L-lysine biosynthesis via DAP pathway; (S)-tetrahydrodipicolinate from L-aspartate: step 3/4. Catalyzes the condensation of (S)-aspartate-beta-semialdehyde [(S)-ASA] and pyruvate to 4-hydroxy-tetrahydrodipicolinate (HTPA). The protein is 4-hydroxy-tetrahydrodipicolinate synthase of Escherichia fergusonii (strain ATCC 35469 / DSM 13698 / CCUG 18766 / IAM 14443 / JCM 21226 / LMG 7866 / NBRC 102419 / NCTC 12128 / CDC 0568-73).